Here is an 82-residue protein sequence, read N- to C-terminus: Sec-independent protein translocase protein TatA (82 aa).

Residues 1–21 (MGGISIWQLLIIAVIIVLLFG) form a helical membrane-spanning segment. The segment at 46-82 (DEPAKDAKKDADFVPQNLEKKEAETVEKQKQNDKEQA) is disordered.

Belongs to the TatA/E family. As to quaternary structure, the Tat system comprises two distinct complexes: a TatABC complex, containing multiple copies of TatA, TatB and TatC subunits, and a separate TatA complex, containing only TatA subunits. Substrates initially bind to the TatABC complex, which probably triggers association of the separate TatA complex to form the active translocon.

Its subcellular location is the cell inner membrane. Functionally, part of the twin-arginine translocation (Tat) system that transports large folded proteins containing a characteristic twin-arginine motif in their signal peptide across membranes. TatA could form the protein-conducting channel of the Tat system. The polypeptide is Sec-independent protein translocase protein TatA (Aliivibrio fischeri (strain MJ11) (Vibrio fischeri)).